The primary structure comprises 481 residues: Transmembrane protein 39A (481 aa).

Helical transmembrane passes span L74 to I94, S109 to L129, L150 to L170, S182 to L202, E278 to V298, L313 to Y333, L411 to L431, and N437 to L457.

The protein belongs to the TMEM39 family.

The protein resides in the endoplasmic reticulum membrane. In terms of biological role, regulates autophagy by controlling the spatial distribution and levels of the intracellular phosphatidylinositol 4-phosphate (PtdIns(4)P) pools. Modulates (PtdIns(4)P) levels by regulating the ER-to-Golgi trafficking of the phosphatidylinositide phosphatase SACM1L. In Danio rerio (Zebrafish), this protein is Transmembrane protein 39A (tmem39a).